Reading from the N-terminus, the 80-residue chain is Raniseptin-5 (80 aa).

Residues 1–22 form the signal peptide; the sequence is MAFLKKSLFLVLFLGIVSLSIC. Residues 23–49 constitute a propeptide that is removed on maturation; the sequence is EEEKREGEEEEKQEEENEELSEEELRE.

Belongs to the frog skin active peptide (FSAP) family. Dermaseptin subfamily. Expressed by the skin glands.

Its subcellular location is the secreted. Functionally, has antibacterial activity. The protein is Raniseptin-5 of Boana raniceps (Chaco tree frog).